We begin with the raw amino-acid sequence, 752 residues long: Phosphoribosylformylglycinamidine synthase subunit PurL (752 aa).

The active site involves His-58. ATP contacts are provided by Tyr-61 and Lys-103. Residue Glu-105 participates in Mg(2+) binding. Substrate-binding positions include Ser-106–His-109 and Arg-128. His-107 functions as the Proton acceptor in the catalytic mechanism. Position 129 (Asp-129) interacts with Mg(2+). Gln-253 contacts substrate. Asp-281 contributes to the Mg(2+) binding site. Glu-325–Gln-327 provides a ligand contact to substrate. Residues Asp-513 and Gly-550 each contribute to the ATP site. Asn-551 serves as a coordination point for Mg(2+). Ser-553 is a binding site for substrate.

Belongs to the FGAMS family. As to quaternary structure, monomer. Part of the FGAM synthase complex composed of 1 PurL, 1 PurQ and 2 PurS subunits.

The protein resides in the cytoplasm. The enzyme catalyses N(2)-formyl-N(1)-(5-phospho-beta-D-ribosyl)glycinamide + L-glutamine + ATP + H2O = 2-formamido-N(1)-(5-O-phospho-beta-D-ribosyl)acetamidine + L-glutamate + ADP + phosphate + H(+). The protein operates within purine metabolism; IMP biosynthesis via de novo pathway; 5-amino-1-(5-phospho-D-ribosyl)imidazole from N(2)-formyl-N(1)-(5-phospho-D-ribosyl)glycinamide: step 1/2. Part of the phosphoribosylformylglycinamidine synthase complex involved in the purines biosynthetic pathway. Catalyzes the ATP-dependent conversion of formylglycinamide ribonucleotide (FGAR) and glutamine to yield formylglycinamidine ribonucleotide (FGAM) and glutamate. The FGAM synthase complex is composed of three subunits. PurQ produces an ammonia molecule by converting glutamine to glutamate. PurL transfers the ammonia molecule to FGAR to form FGAM in an ATP-dependent manner. PurS interacts with PurQ and PurL and is thought to assist in the transfer of the ammonia molecule from PurQ to PurL. The protein is Phosphoribosylformylglycinamidine synthase subunit PurL of Streptomyces coelicolor (strain ATCC BAA-471 / A3(2) / M145).